Here is a 233-residue protein sequence, read N- to C-terminus: Small ribosomal subunit protein uS3 (233 aa).

The KH type-2 domain maps to 39–107 (VREFLKAKLK…PVHVNIEEVR (69 aa)). The disordered stretch occupies residues 209-233 (PGQVSAEPTQPEKKMRKGGRNAAAN).

Belongs to the universal ribosomal protein uS3 family. Part of the 30S ribosomal subunit. Forms a tight complex with proteins S10 and S14.

Functionally, binds the lower part of the 30S subunit head. Binds mRNA in the 70S ribosome, positioning it for translation. This is Small ribosomal subunit protein uS3 from Laribacter hongkongensis (strain HLHK9).